The sequence spans 592 residues: UvrABC system protein C (592 aa).

The 78-residue stretch at 14–91 folds into the GIY-YIG domain; that stretch reads KKPGCYLWKN…IKKHKPRYNI (78 aa). The UVR domain maps to 197–232; the sequence is DQVLKDLKEKESIASEKFDFEQAKKYLDLQKAINLI.

It belongs to the UvrC family. In terms of assembly, interacts with UvrB in an incision complex.

It is found in the cytoplasm. In terms of biological role, the UvrABC repair system catalyzes the recognition and processing of DNA lesions. UvrC both incises the 5' and 3' sides of the lesion. The N-terminal half is responsible for the 3' incision and the C-terminal half is responsible for the 5' incision. This is UvrABC system protein C from Mycoplasmoides gallisepticum (strain R(low / passage 15 / clone 2)) (Mycoplasma gallisepticum).